A 162-amino-acid chain; its full sequence is ATP synthase subunit b (162 aa).

The helical transmembrane segment at 6–25 (TLFTLVTFLVLMLAVGKVAW) threads the bilayer.

The protein belongs to the ATPase B chain family. As to quaternary structure, F-type ATPases have 2 components, F(1) - the catalytic core - and F(0) - the membrane proton channel. F(1) has five subunits: alpha(3), beta(3), gamma(1), delta(1), epsilon(1). F(0) has three main subunits: a(1), b(2) and c(10-14). The alpha and beta chains form an alternating ring which encloses part of the gamma chain. F(1) is attached to F(0) by a central stalk formed by the gamma and epsilon chains, while a peripheral stalk is formed by the delta and b chains.

It is found in the cell membrane. F(1)F(0) ATP synthase produces ATP from ADP in the presence of a proton or sodium gradient. F-type ATPases consist of two structural domains, F(1) containing the extramembraneous catalytic core and F(0) containing the membrane proton channel, linked together by a central stalk and a peripheral stalk. During catalysis, ATP synthesis in the catalytic domain of F(1) is coupled via a rotary mechanism of the central stalk subunits to proton translocation. Functionally, component of the F(0) channel, it forms part of the peripheral stalk, linking F(1) to F(0). In Lacticaseibacillus casei (strain BL23) (Lactobacillus casei), this protein is ATP synthase subunit b.